The primary structure comprises 358 residues: Peptide chain release factor 1 (358 aa).

Position 236 is an N5-methylglutamine (Q236).

Belongs to the prokaryotic/mitochondrial release factor family. Methylated by PrmC. Methylation increases the termination efficiency of RF1.

The protein resides in the cytoplasm. Its function is as follows. Peptide chain release factor 1 directs the termination of translation in response to the peptide chain termination codons UAG and UAA. This is Peptide chain release factor 1 from Corynebacterium glutamicum (strain ATCC 13032 / DSM 20300 / JCM 1318 / BCRC 11384 / CCUG 27702 / LMG 3730 / NBRC 12168 / NCIMB 10025 / NRRL B-2784 / 534).